The chain runs to 571 residues: Proline--tRNA ligase (571 aa).

Belongs to the class-II aminoacyl-tRNA synthetase family. ProS type 1 subfamily. As to quaternary structure, homodimer.

The protein localises to the cytoplasm. It catalyses the reaction tRNA(Pro) + L-proline + ATP = L-prolyl-tRNA(Pro) + AMP + diphosphate. Functionally, catalyzes the attachment of proline to tRNA(Pro) in a two-step reaction: proline is first activated by ATP to form Pro-AMP and then transferred to the acceptor end of tRNA(Pro). As ProRS can inadvertently accommodate and process non-cognate amino acids such as alanine and cysteine, to avoid such errors it has two additional distinct editing activities against alanine. One activity is designated as 'pretransfer' editing and involves the tRNA(Pro)-independent hydrolysis of activated Ala-AMP. The other activity is designated 'posttransfer' editing and involves deacylation of mischarged Ala-tRNA(Pro). The misacylated Cys-tRNA(Pro) is not edited by ProRS. The polypeptide is Proline--tRNA ligase (Pseudoalteromonas atlantica (strain T6c / ATCC BAA-1087)).